Here is a 187-residue protein sequence, read N- to C-terminus: Adenine phosphoribosyltransferase 1 (187 aa).

At Ser-68 the chain carries Phosphoserine. Position 133–137 (133–137 (ATGGS)) interacts with AMP.

It belongs to the purine/pyrimidine phosphoribosyltransferase family. In terms of assembly, homodimer. Requires Mg(2+) as cofactor.

It is found in the cytoplasm. Its subcellular location is the nucleus. It catalyses the reaction AMP + diphosphate = 5-phospho-alpha-D-ribose 1-diphosphate + adenine. It participates in purine metabolism; AMP biosynthesis via salvage pathway; AMP from adenine: step 1/1. Catalyzes a salvage reaction resulting in the formation of AMP, that is energically less costly than de novo synthesis. This Saccharomyces cerevisiae (strain ATCC 204508 / S288c) (Baker's yeast) protein is Adenine phosphoribosyltransferase 1.